Reading from the N-terminus, the 890-residue chain is Alanine--tRNA ligase (890 aa).

Positions 578, 582, 689, and 693 each coordinate Zn(2+).

The protein belongs to the class-II aminoacyl-tRNA synthetase family. The cofactor is Zn(2+).

The protein localises to the cytoplasm. It carries out the reaction tRNA(Ala) + L-alanine + ATP = L-alanyl-tRNA(Ala) + AMP + diphosphate. Functionally, catalyzes the attachment of alanine to tRNA(Ala) in a two-step reaction: alanine is first activated by ATP to form Ala-AMP and then transferred to the acceptor end of tRNA(Ala). Also edits incorrectly charged Ser-tRNA(Ala) and Gly-tRNA(Ala) via its editing domain. In Deinococcus radiodurans (strain ATCC 13939 / DSM 20539 / JCM 16871 / CCUG 27074 / LMG 4051 / NBRC 15346 / NCIMB 9279 / VKM B-1422 / R1), this protein is Alanine--tRNA ligase.